The sequence spans 131 residues: D-ribose pyranase (131 aa).

Residue His-20 is the Proton donor of the active site. Residues Asp-28, His-98, and Tyr-120–Asn-122 contribute to the substrate site.

This sequence belongs to the RbsD / FucU family. RbsD subfamily. As to quaternary structure, homodecamer.

It localises to the cytoplasm. The enzyme catalyses beta-D-ribopyranose = beta-D-ribofuranose. It functions in the pathway carbohydrate metabolism; D-ribose degradation; D-ribose 5-phosphate from beta-D-ribopyranose: step 1/2. Its function is as follows. Catalyzes the interconversion of beta-pyran and beta-furan forms of D-ribose. The protein is D-ribose pyranase of Bacillus cereus (strain B4264).